Consider the following 38-residue polypeptide: Mu/omega-theraphotoxin-Mb1b (38 aa).

Disulfide bonds link Cys-7–Cys-21, Cys-14–Cys-26, and Cys-20–Cys-33. Ser-38 carries the serine amide modification.

The protein belongs to the neurotoxin 10 (Hwtx-1) family. 28 (Jztx-11) subfamily. Expressed by the venom gland.

It localises to the secreted. In terms of biological role, paralytic toxin on insects that inhibits voltage-gated sodium (Nav) and calcium (Cav) channels in P.americana (American cockroach) dorsal unpaired median (DUM) neurons, and also inhibits the B.germanica (German cockroach) Nav channel (BgNaV1). May act as a gating-modifier toxin on Nav and as a pore blocker on Cav. In vivo, reversibly paralyzes both L.cuprina (Australian sheep blowfly) and M.domestica (housefly), but does not affect larvae of H.armigera (cotton bollworms). This Monocentropus balfouri (Socotra Island blue baboon tarantula) protein is Mu/omega-theraphotoxin-Mb1b.